Consider the following 191-residue polypeptide: Orotate phosphoribosyltransferase (191 aa).

114 to 122 (EDVVTTGKS) lines the 5-phospho-alpha-D-ribose 1-diphosphate pocket. Orotate is bound by residues Thr-118 and Arg-146.

The protein belongs to the purine/pyrimidine phosphoribosyltransferase family. PyrE subfamily. As to quaternary structure, homodimer. Requires Mg(2+) as cofactor.

It carries out the reaction orotidine 5'-phosphate + diphosphate = orotate + 5-phospho-alpha-D-ribose 1-diphosphate. Its pathway is pyrimidine metabolism; UMP biosynthesis via de novo pathway; UMP from orotate: step 1/2. Catalyzes the transfer of a ribosyl phosphate group from 5-phosphoribose 1-diphosphate to orotate, leading to the formation of orotidine monophosphate (OMP). This chain is Orotate phosphoribosyltransferase, found in Clostridium botulinum (strain Loch Maree / Type A3).